Here is a 101-residue protein sequence, read N- to C-terminus: Small ribosomal subunit protein uS14 (101 aa).

The protein belongs to the universal ribosomal protein uS14 family. In terms of assembly, part of the 30S ribosomal subunit. Contacts proteins S3 and S10.

Its function is as follows. Binds 16S rRNA, required for the assembly of 30S particles and may also be responsible for determining the conformation of the 16S rRNA at the A site. The polypeptide is Small ribosomal subunit protein uS14 (Beijerinckia indica subsp. indica (strain ATCC 9039 / DSM 1715 / NCIMB 8712)).